The following is an 805-amino-acid chain: Rho GTPase-activating protein 42 (805 aa).

Residues 7–262 (EFSDSFLDSP…IRSAEQDFKA (256 aa)) form the BAR domain. The stretch at 225–262 (KQQLQFNLQNTRNNFESTRQEVENLMRRIRSAEQDFKA) forms a coiled coil. Residues 265–374 (QWTMEGFLYV…WMEAMDGKEP (110 aa)) enclose the PH domain. Positions 376–572 (YTLPALLSKK…ILIENYDKIF (197 aa)) constitute a Rho-GAP domain. 3 disordered regions span residues 576–600 (PDPN…RSKA), 625–725 (SDTF…SELL), and 765–805 (VSRS…PGSV). Over residues 626 to 654 (DTFSSSPSSTPMGSMESLSSHSSEQNSCS) the composition is skewed to low complexity. Positions 670–693 (LCWTTPSPSTNGPKSPACTTSPDS) are enriched in polar residues. Positions 694–704 (SSKEDANKTDG) are enriched in basic and acidic residues. Polar residues predominate over residues 710 to 721 (LSTSPGDRSSPA). The segment covering 782–793 (PPKDGMRFRDDS) has biased composition (basic and acidic residues).

Functionally, may influence blood pressure by functioning as a GTPase-activating protein in vascular smooth muscle. The chain is Rho GTPase-activating protein 42 from Danio rerio (Zebrafish).